Here is a 698-residue protein sequence, read N- to C-terminus: DNA ligase (698 aa).

Residues 40–44 (DDVYD), 89–90 (SL), and Glu123 each bind NAD(+). The active-site N6-AMP-lysine intermediate is the Lys125. The NAD(+) site is built by Arg146, Glu184, Lys300, and Lys324. The Zn(2+) site is built by Cys417, Cys420, Cys435, and Cys441. Residues 618-698 (SSASPVAGKA…EWLALTGAAD (81 aa)) form the BRCT domain.

This sequence belongs to the NAD-dependent DNA ligase family. LigA subfamily. Mg(2+) serves as cofactor. It depends on Mn(2+) as a cofactor.

It carries out the reaction NAD(+) + (deoxyribonucleotide)n-3'-hydroxyl + 5'-phospho-(deoxyribonucleotide)m = (deoxyribonucleotide)n+m + AMP + beta-nicotinamide D-nucleotide.. DNA ligase that catalyzes the formation of phosphodiester linkages between 5'-phosphoryl and 3'-hydroxyl groups in double-stranded DNA using NAD as a coenzyme and as the energy source for the reaction. It is essential for DNA replication and repair of damaged DNA. The protein is DNA ligase of Paramagnetospirillum magneticum (strain ATCC 700264 / AMB-1) (Magnetospirillum magneticum).